The sequence spans 543 residues: CTP synthase (543 aa).

The amidoligase domain stretch occupies residues 1–265 (MARYIFITGG…DDEVLAAFGI (265 aa)). Residue Ser-13 coordinates CTP. Ser-13 serves as a coordination point for UTP. 14 to 19 (SLGKGL) contacts ATP. Tyr-54 serves as a coordination point for L-glutamine. Position 71 (Asp-71) interacts with ATP. The Mg(2+) site is built by Asp-71 and Glu-139. CTP is bound by residues 146-148 (DIE), 186-191 (KTKPTQ), and Lys-222. Residues 186–191 (KTKPTQ) and Lys-222 contribute to the UTP site. An ATP-binding site is contributed by 238 to 240 (RDA). A Glutamine amidotransferase type-1 domain is found at 291 to 542 (TIAIVGKYTG…IQAAVVQSRL (252 aa)). Residue Gly-353 coordinates L-glutamine. Cys-380 acts as the Nucleophile; for glutamine hydrolysis in catalysis. Residues 381–384 (FGMQ), Glu-404, and Arg-470 contribute to the L-glutamine site. Active-site residues include His-515 and Glu-517.

It belongs to the CTP synthase family. As to quaternary structure, homotetramer.

The enzyme catalyses UTP + L-glutamine + ATP + H2O = CTP + L-glutamate + ADP + phosphate + 2 H(+). It catalyses the reaction L-glutamine + H2O = L-glutamate + NH4(+). It carries out the reaction UTP + NH4(+) + ATP = CTP + ADP + phosphate + 2 H(+). Its pathway is pyrimidine metabolism; CTP biosynthesis via de novo pathway; CTP from UDP: step 2/2. Its activity is regulated as follows. Allosterically activated by GTP, when glutamine is the substrate; GTP has no effect on the reaction when ammonia is the substrate. The allosteric effector GTP functions by stabilizing the protein conformation that binds the tetrahedral intermediate(s) formed during glutamine hydrolysis. Inhibited by the product CTP, via allosteric rather than competitive inhibition. In terms of biological role, catalyzes the ATP-dependent amination of UTP to CTP with either L-glutamine or ammonia as the source of nitrogen. Regulates intracellular CTP levels through interactions with the four ribonucleotide triphosphates. This Nitrobacter winogradskyi (strain ATCC 25391 / DSM 10237 / CIP 104748 / NCIMB 11846 / Nb-255) protein is CTP synthase.